A 410-amino-acid chain; its full sequence is Large ribosomal subunit protein uL4 (410 aa).

The protein belongs to the universal ribosomal protein uL4 family.

It localises to the cytoplasm. The sequence is that of Large ribosomal subunit protein uL4 (RPL4) from Tetrahymena thermophila (strain SB210).